Consider the following 355-residue polypeptide: tRNA uridine(34) hydroxylase (355 aa).

Residues 146–240 enclose the Rhodanese domain; sequence DDPDTLFVDM…YARKAKEQGL (95 aa). C200 serves as the catalytic Cysteine persulfide intermediate. The interval 333–355 is disordered; sequence NKSKGLLQATMHIPSPEKSADEK.

This sequence belongs to the TrhO family.

The catalysed reaction is uridine(34) in tRNA + AH2 + O2 = 5-hydroxyuridine(34) in tRNA + A + H2O. In terms of biological role, catalyzes oxygen-dependent 5-hydroxyuridine (ho5U) modification at position 34 in tRNAs. This chain is tRNA uridine(34) hydroxylase, found in Yersinia pseudotuberculosis serotype O:1b (strain IP 31758).